Consider the following 408-residue polypeptide: LL-diaminopimelate aminotransferase (408 aa).

Substrate is bound by residues tyrosine 15 and glycine 42. Pyridoxal 5'-phosphate-binding positions include tyrosine 72, 108–109 (SK), tyrosine 132, asparagine 187, tyrosine 218, and 246–248 (SFS). Positions 109, 132, and 187 each coordinate substrate. Lysine 249 bears the N6-(pyridoxal phosphate)lysine mark. Arginine 257 and asparagine 291 together coordinate pyridoxal 5'-phosphate. Residues asparagine 291 and arginine 387 each contribute to the substrate site.

It belongs to the class-I pyridoxal-phosphate-dependent aminotransferase family. LL-diaminopimelate aminotransferase subfamily. As to quaternary structure, homodimer. Pyridoxal 5'-phosphate is required as a cofactor.

The enzyme catalyses (2S,6S)-2,6-diaminopimelate + 2-oxoglutarate = (S)-2,3,4,5-tetrahydrodipicolinate + L-glutamate + H2O + H(+). It functions in the pathway amino-acid biosynthesis; L-lysine biosynthesis via DAP pathway; LL-2,6-diaminopimelate from (S)-tetrahydrodipicolinate (aminotransferase route): step 1/1. Functionally, involved in the synthesis of meso-diaminopimelate (m-DAP or DL-DAP), required for both lysine and peptidoglycan biosynthesis. Catalyzes the direct conversion of tetrahydrodipicolinate to LL-diaminopimelate. The sequence is that of LL-diaminopimelate aminotransferase from Prochlorococcus marinus (strain NATL2A).